Reading from the N-terminus, the 315-residue chain is MNLDYLPFEQPIAELEQKIEELRLVGNDNELNISDEISRLEDKKIALTKSLFSNLGAWEVSQLARHPKRPYTLDYIKHVFTDFEEMHGDRHYADDRAIVGGIARLDGRPVMVIGHQKGREVKEKVLRNFGMPRPEGYRKALRLMETAERFNMPIVTLIDTPGAYPGIGAEERGQSEAIAFNLAVMSRLKTPIISTVIGEGGSGGALAIGVCDELMMLQYGTYSVISPEGCASILWKSADRASDAAKAMGITAQRLQELGFVDTIIQEPLGGAHISHEEMAQSLKKNVLAALDRMEALTTEELLARRYNRLMSYGL.

Residues 40–293 form the CoA carboxyltransferase C-terminal domain; the sequence is LEDKKIALTK…KKNVLAALDR (254 aa).

The protein belongs to the AccA family. Acetyl-CoA carboxylase is a heterohexamer composed of biotin carboxyl carrier protein (AccB), biotin carboxylase (AccC) and two subunits each of ACCase subunit alpha (AccA) and ACCase subunit beta (AccD).

Its subcellular location is the cytoplasm. The enzyme catalyses N(6)-carboxybiotinyl-L-lysyl-[protein] + acetyl-CoA = N(6)-biotinyl-L-lysyl-[protein] + malonyl-CoA. It functions in the pathway lipid metabolism; malonyl-CoA biosynthesis; malonyl-CoA from acetyl-CoA: step 1/1. In terms of biological role, component of the acetyl coenzyme A carboxylase (ACC) complex. First, biotin carboxylase catalyzes the carboxylation of biotin on its carrier protein (BCCP) and then the CO(2) group is transferred by the carboxyltransferase to acetyl-CoA to form malonyl-CoA. The sequence is that of Acetyl-coenzyme A carboxylase carboxyl transferase subunit alpha from Marinomonas sp. (strain MWYL1).